Reading from the N-terminus, the 23-residue chain is IIGDTINGAITTADNIVGRIGII.

In terms of tissue distribution, expressed in skin granular glands.

The protein localises to the secreted. Functionally, may act as an antimicrobial peptide. This Osteopilus septentrionalis (Cuban treefrog) protein is Septenin 2c.